Reading from the N-terminus, the 62-residue chain is MAVPRANTSKARTRRRRAVNMRLEAPHLVECGNCGNFVQSHRVCGRCGFYRGRQVINPDDLC.

The protein belongs to the bacterial ribosomal protein bL32 family.

The protein is Large ribosomal subunit protein bL32 (rpmF) of Treponema pallidum (strain Nichols).